Here is a 377-residue protein sequence, read N- to C-terminus: MRLKRNMSDNSQKKVIVGMSGGVDSSVSAYLLLQQGYQVEGLFMKNWEEDDNEEYCSAAEDLADAQAVCDKLGIHLHTINFAAEYWDNVFEYFLAEYKAGRTPNPDILCNKEIKFKAFLEFADEVLEADYIAMGHYTRRSFPTAEGEKPKMLRGVDSNKDQSYFLYTLSHEQIARSLFPVGELEKPEVRRIAEEQDLITAKKKDSTGICFIGERKFTEFLGKYLPAQPGKIETADEGKVIGEHQGLMYHTLGQRKGLHIGGQKGGNGLEDAWYVVDKDLKRNVLIVGQGKDHPRLKSNGLVASQLDWVDRQPIRETMTCTVKTRYRQEDIPCTIIPIDDENIKVIFDEPQIAVTPGQSAVFYSNEICLGGGIIEQRI.

Residues 18-25 (GMSGGVDS) and Met44 contribute to the ATP site. Residues 104–106 (NPD) form an interaction with target base in tRNA region. The active-site Nucleophile is Cys109. A disulfide bond links Cys109 and Cys209. Gly134 is an ATP binding site. The segment at 159–161 (KDQ) is interaction with tRNA. Catalysis depends on Cys209, which acts as the Cysteine persulfide intermediate. Positions 324–325 (RY) are interaction with tRNA.

This sequence belongs to the MnmA/TRMU family.

It is found in the cytoplasm. It catalyses the reaction S-sulfanyl-L-cysteinyl-[protein] + uridine(34) in tRNA + AH2 + ATP = 2-thiouridine(34) in tRNA + L-cysteinyl-[protein] + A + AMP + diphosphate + H(+). Its function is as follows. Catalyzes the 2-thiolation of uridine at the wobble position (U34) of tRNA, leading to the formation of s(2)U34. The sequence is that of tRNA-specific 2-thiouridylase MnmA from Photobacterium profundum (strain SS9).